An 847-amino-acid polypeptide reads, in one-letter code: Leucine--tRNA ligase (847 aa).

The 'HIGH' region signature appears at 39 to 49 (PYPSGALHMGH). A 'KMSKS' region motif is present at residues 613 to 617 (KMSKS). Lys-616 lines the ATP pocket.

The protein belongs to the class-I aminoacyl-tRNA synthetase family.

It localises to the cytoplasm. The catalysed reaction is tRNA(Leu) + L-leucine + ATP = L-leucyl-tRNA(Leu) + AMP + diphosphate. The polypeptide is Leucine--tRNA ligase (Gloeobacter violaceus (strain ATCC 29082 / PCC 7421)).